Reading from the N-terminus, the 812-residue chain is 5-methyltetrahydropteroyltriglutamate--homocysteine methyltransferase 3, chloroplastic (812 aa).

Residues 1–33 (MGQLALQRLQPLASLPRRPPSLPPPSSATPSLP) constitute a chloroplast transit peptide. The tract at residues 13–33 (ASLPRRPPSLPPPSSATPSLP) is disordered. Pro residues predominate over residues 17-27 (RRPPSLPPPSS). The 5-methyltetrahydropteroyltri-L-glutamate site is built by K66 and N164. The interval 430–456 (MRQASRRSSPRVTNAAVQQDVDAVKKS) is disordered. L-homocysteine-binding positions include 485-487 (IGS) and E538. Residues 485–487 (IGS) and E538 each bind L-methionine. 5-methyltetrahydropteroyltri-L-glutamate-binding positions include D543, Y566, 569–570 (RC), and W615. D653 contacts L-homocysteine. An L-methionine-binding site is contributed by D653. Positions 695, 697, 706, 710, and 719 each coordinate Zn(2+). H749 acts as the Proton donor in catalysis. C781 lines the Zn(2+) pocket.

This sequence belongs to the vitamin-B12 independent methionine synthase family. Zn(2+) is required as a cofactor. In terms of tissue distribution, expressed in seeds.

The protein resides in the plastid. It localises to the chloroplast. It carries out the reaction 5-methyltetrahydropteroyltri-L-glutamate + L-homocysteine = tetrahydropteroyltri-L-glutamate + L-methionine. It participates in amino-acid biosynthesis; L-methionine biosynthesis via de novo pathway; L-methionine from L-homocysteine (MetE route): step 1/1. Catalyzes the transfer of a methyl group from 5-methyltetrahydrofolate to homocysteine resulting in methionine formation. This chain is 5-methyltetrahydropteroyltriglutamate--homocysteine methyltransferase 3, chloroplastic (MS3), found in Arabidopsis thaliana (Mouse-ear cress).